We begin with the raw amino-acid sequence, 1912 residues long: Methylcytosine dioxygenase TET2 (1912 aa).

Basic and acidic residues predominate over residues 1–11 (MEQDRTTHAEG). The segment at 1–86 (MEQDRTTHAE…PHEDRGYSRC (86 aa)) is disordered. 2 positions are modified to phosphoserine: S15 and S23. The segment covering 53-74 (TKWQSSQSCYGISHMKGSQSSH) has biased composition (polar residues). Phosphoserine is present on residues S76 and S97. Disordered stretches follow at residues 112-166 (LDQK…FPTR), 340-359 (DRNL…QKET), 367-388 (SSKF…QSLL), 429-470 (IDHQ…PEKS), 673-723 (PQTQ…DKQR), 832-862 (EQAQ…AEAA), 907-966 (QEQQ…NGQP), and 1009-1052 (ESEN…EGCN). Polar residues-rich tracts occupy residues 135 to 158 (SRQP…QESS), 340 to 353 (DRNL…SEQY), 367 to 387 (SSKF…SQSL), 434 to 447 (KTSS…SVHT), and 673 to 689 (PQTQ…SNFP). Residues 690–701 (QICQQQQQQQLQ) show a composition bias toward low complexity. Composition is skewed to polar residues over residues 707–719 (QMPQ…QGSN) and 832–844 (EQAQ…SSLQ). Positions 907–921 (QEQQQTQQSQPGHNQ) are enriched in low complexity. 2 stretches are compositionally biased toward polar residues: residues 944–966 (PQEN…NGQP) and 1036–1046 (SDTPGEQSQNG). S1036 carries the post-translational modification Phosphoserine. Zn(2+) contacts are provided by C1048, C1106, H1132, and C1134. R1174 contacts 2-oxoglutarate. Positions 1184, 1186, 1202, and 1211 each coordinate Zn(2+). The tract at residues 1203–1216 (SWSMYYNGCKFARS) is interaction with DNA. K1212 participates in a covalent cross-link: Glycyl lysine isopeptide (Lys-Gly) (interchain with G-Cter in ubiquitin). Residue C1271 participates in Zn(2+) binding. C1287 contributes to the 2-oxoglutarate binding site. H1293 serves as a coordination point for Zn(2+). Fe cation is bound by residues H1295 and D1297. N1300 is a substrate binding site. 2-oxoglutarate is bound at residue H1329. Disordered stretches follow at residues 1379 to 1414 (KKKA…SSSH) and 1444 to 1514 (LQRH…HTSD). Basic residues predominate over residues 1387-1396 (AKTKKAARKR). Positions 1456–1473 (QPQPPQPQPQTTPQPQPQ) are enriched in pro residues. Polar residues predominate over residues 1480–1512 (GNSQSVGSHCSGSTSVYTRQPTPHSPYPSSAHT). Position 1795 (H1795) interacts with Fe cation. 1810–1812 (RIS) contacts 2-oxoglutarate. Residue 1816 to 1818 (YRH) participates in substrate binding. H1826 serves as a coordination point for Zn(2+). Residues 1842-1866 (EEECGKNGSDHVSQKNHGKQEKREP) are compositionally biased toward basic and acidic residues. The disordered stretch occupies residues 1842-1871 (EEECGKNGSDHVSQKNHGKQEKREPTGPQE).

The protein belongs to the TET family. As to quaternary structure, interacts with HCFC1. Interacts with OGT. Interacts with PROSER1; this interaction mediates TET2 O-GlcNAcylation and stability by promoting the interaction between OGT and TET2. Directly interacts (via C-terminus) with the DCAF1 component of the CRL4(VprBP) E3 ubiquitin-protein ligase complex. Requires Fe(2+) as cofactor. Zn(2+) serves as cofactor. Post-translationally, may be glycosylated. It is unclear whether interaction with OGT leads to GlcNAcylation. According to a report, it is GlcNAcylated by OGT. In contrast, another group reports no GlcNAcylation by OGT in human ortholog. Monoubiquitinated at Lys-1212 by the DCX (DDB1-CUL4-X-box) E3 ubiquitin-protein ligase complex called CRL4(VprBP) or CUL4A-RBX1-DDB1-DCAF1/VPRBP complex; this modification promotes binding to DNA. In terms of processing, acetylated. As to expression, expressed in the brain, kidney, heart, lung, muscle and stomach. Expressed in germinal vesicle (GV) stage and MII-stage oocytes and in early embryos. Present in embryonic stem cells (ES cells).

The protein resides in the nucleus. Its subcellular location is the chromosome. It catalyses the reaction a 5-methyl-2'-deoxycytidine in DNA + 2-oxoglutarate + O2 = a 5-hydroxymethyl-2'-deoxycytidine in DNA + succinate + CO2. The catalysed reaction is a 5-hydroxymethyl-2'-deoxycytidine in DNA + 2-oxoglutarate + O2 = a 5-formyl-2'-deoxycytidine in DNA + succinate + CO2 + H2O. The enzyme catalyses a 5-formyl-2'-deoxycytidine in DNA + 2-oxoglutarate + O2 = a 5-carboxyl-2'-deoxycytidine in DNA + succinate + CO2 + H(+). Functionally, dioxygenase that catalyzes the conversion of the modified genomic base 5-methylcytosine (5mC) into 5-hydroxymethylcytosine (5hmC) and plays a key role in active DNA demethylation. Has a preference for 5-hydroxymethylcytosine in CpG motifs. Also mediates subsequent conversion of 5hmC into 5-formylcytosine (5fC), and conversion of 5fC to 5-carboxylcytosine (5caC). Conversion of 5mC into 5hmC, 5fC and 5caC probably constitutes the first step in cytosine demethylation. Methylation at the C5 position of cytosine bases is an epigenetic modification of the mammalian genome which plays an important role in transcriptional regulation. In addition to its role in DNA demethylation, also involved in the recruitment of the O-GlcNAc transferase OGT to CpG-rich transcription start sites of active genes, thereby promoting histone H2B GlcNAcylation by OGT. This chain is Methylcytosine dioxygenase TET2 (Tet2), found in Mus musculus (Mouse).